The following is a 268-amino-acid chain: 3-deoxy-manno-octulosonate cytidylyltransferase (268 aa).

The protein belongs to the KdsB family.

Its subcellular location is the cytoplasm. It catalyses the reaction 3-deoxy-alpha-D-manno-oct-2-ulosonate + CTP = CMP-3-deoxy-beta-D-manno-octulosonate + diphosphate. Its pathway is nucleotide-sugar biosynthesis; CMP-3-deoxy-D-manno-octulosonate biosynthesis; CMP-3-deoxy-D-manno-octulosonate from 3-deoxy-D-manno-octulosonate and CTP: step 1/1. It functions in the pathway bacterial outer membrane biogenesis; lipopolysaccharide biosynthesis. In terms of biological role, activates KDO (a required 8-carbon sugar) for incorporation into bacterial lipopolysaccharide in Gram-negative bacteria. The chain is 3-deoxy-manno-octulosonate cytidylyltransferase from Ralstonia nicotianae (strain ATCC BAA-1114 / GMI1000) (Ralstonia solanacearum).